An 899-amino-acid chain; its full sequence is MEYHPQAIRLCALIFISFYALLHLVEAQDQKGFISLDCGSLPNEPPYNDPSTGLTYSTDDGFVQSGKTGRIQKAFESIFSKPSLKLRYFPDGFRNCYTLNVTQDTNYLIKAVFVYGNYDGLNNPPSFDLYLGPNLWVTVDMNGRTNGTIQEIIHKTISKSLQVCLVKTGTSSPMINTLELRPLKNNTYNTQSGSLKYFFRYYFSGSGQNIRYPDDVNDRKWYPFFDAKEWTELTTNLNINSSNGYAPPEVVMASASTPISTFGTWNFSWLLPSSTTQFYVYMHFAEIQTLRSLDTREFKVTLNGKLAYERYSPKTLATETIFYSTPQQCEDGTCLLELTKTPKSTLPPLMNALEVFTVIDFPQMETNPDDVAAIKSIQSTYGLSKISWQGDPCVPKQFLWEGLNCNNLDNSTPPIVTSLNLSSSHLTGIIAQGIQNLTHLQELDLSNNNLTGGIPEFLADIKSLLVINLSGNNFNGSIPQILLQKKGLKLILEGNANLICPDGLCVNKAGNGGAKKMNVVIPIVASVAFVVVLGSALAFFFIFKKKKTSNSQDLGPSSYTQVSEVRTIRSSESAIMTKNRRFTYSEVVTMTNNFERVLGKGGFGMVYHGTVNNTEQVAVKMLSHSSSQGYKEFKAEVELLLRVHHKNLVGLVGYCDEGENLALIYEYMANGDLREHMSGKRGGSILNWETRLKIVVESAQGLEYLHNGCKPPMVHRDVKTTNILLNEHLHAKLADFGLSRSFPIEGETHVSTVVAGTPGYLDPEYYRTNWLNEKSDVYSFGIVLLEIITNQLVINQSREKPHIAEWVGLMLTKGDIQNIMDPKLYGDYDSGSVWRAVELAMSCLNPSSARRPTMSQVVIELNECLSYENARGGTSQNMNSESSIEVSMNFDIGATPDAR.

Residues 1–27 form the signal peptide; the sequence is MEYHPQAIRLCALIFISFYALLHLVEA. The Extracellular portion of the chain corresponds to 28–522; it reads QDQKGFISLD…GAKKMNVVIP (495 aa). N-linked (GlcNAc...) asparagine glycans are attached at residues N100, N146, N185, N240, N266, N420, N436, N449, N468, and N475. 3 LRR repeats span residues 415 to 438, 439 to 461, and 463 to 485; these read IVTS…QNLT, HLQE…LADI, and SLLV…LLQK. The helical transmembrane segment at 523-543 threads the bilayer; it reads IVASVAFVVVLGSALAFFFIF. At 544–899 the chain is on the cytoplasmic side; it reads KKKKTSNSQD…FDIGATPDAR (356 aa). A Phosphothreonine modification is found at T583. One can recognise a Protein kinase domain in the interval 592 to 865; the sequence is NNFERVLGKG…QVVIELNECL (274 aa). ATP is bound by residues 598-606 and K620; that span reads LGKGGFGMV. Phosphotyrosine is present on Y665. The Proton acceptor role is filled by D717. Residue S751 is modified to Phosphoserine. Phosphothreonine is present on residues T752 and T757. Y765 is modified (phosphotyrosine).

It belongs to the protein kinase superfamily. Ser/Thr protein kinase family. Autophosphorylated on Tyr and Thr residues.

It is found in the cell membrane. It catalyses the reaction L-seryl-[protein] + ATP = O-phospho-L-seryl-[protein] + ADP + H(+). It carries out the reaction L-threonyl-[protein] + ATP = O-phospho-L-threonyl-[protein] + ADP + H(+). The enzyme catalyses L-tyrosyl-[protein] + ATP = O-phospho-L-tyrosyl-[protein] + ADP + H(+). Probable receptor with a dual specificity kinase activity acting on both serine/threonine- and tyrosine-containing substrates. This Arabidopsis thaliana (Mouse-ear cress) protein is Receptor-like protein kinase At3g21340.